We begin with the raw amino-acid sequence, 593 residues long: Capsid protein 1 (593 aa).

The protein belongs to the NCLDV major capsid protein family.

The protein localises to the virion. This is Capsid protein 1 from Acanthamoeba polyphaga mimivirus (APMV).